Here is a 174-residue protein sequence, read N- to C-terminus: Protein SHI RELATED SEQUENCE 3 (174 aa).

Residues cysteine 9, cysteine 12, cysteine 20, cysteine 25, cysteine 29, and cysteine 36 each contribute to the Zn(2+) site. The segment at residues 9–36 (CEDCGNQAKKDCVYMRCRTCCKSKAFHC) is a DNA-binding region (zn(2)-C6 fungal-type; degenerate). The Required for homo- and heterodimerization motif lies at 110 to 113 (IGGH).

This sequence belongs to the SHI protein family.

It is found in the nucleus. In terms of biological role, transcription activator that binds DNA on 5'-ACTCTAC-3' and promotes auxin homeostasis-regulating gene expression (e.g. YUC genes), as well as genes affecting stamen development, cell expansion and timing of flowering. Synergistically with other SHI-related proteins, regulates gynoecium, stamen and leaf development in a dose-dependent manner, controlling apical-basal patterning. Promotes style and stigma formation, and influences vascular development during gynoecium development. May also have a role in the formation and/or maintenance of the shoot apical meristem (SAM). In Arabidopsis thaliana (Mouse-ear cress), this protein is Protein SHI RELATED SEQUENCE 3 (SRS3).